A 467-amino-acid polypeptide reads, in one-letter code: ATP-dependent protease ATPase subunit HslU (467 aa).

Residues I18, 60–65, D280, E345, and R417 each bind ATP; that span reads GVGKTE.

The protein belongs to the ClpX chaperone family. HslU subfamily. A double ring-shaped homohexamer of HslV is capped on each side by a ring-shaped HslU homohexamer. The assembly of the HslU/HslV complex is dependent on binding of ATP.

It localises to the cytoplasm. Functionally, ATPase subunit of a proteasome-like degradation complex; this subunit has chaperone activity. The binding of ATP and its subsequent hydrolysis by HslU are essential for unfolding of protein substrates subsequently hydrolyzed by HslV. HslU recognizes the N-terminal part of its protein substrates and unfolds these before they are guided to HslV for hydrolysis. This chain is ATP-dependent protease ATPase subunit HslU, found in Lactobacillus helveticus (strain DPC 4571).